A 351-amino-acid polypeptide reads, in one-letter code: 3-dehydroquinate synthase (351 aa).

Residues 126–127, lysine 138, and lysine 147 each bind NAD(+); that span reads TT. Zn(2+)-binding residues include glutamate 180, histidine 244, and histidine 260.

The protein belongs to the sugar phosphate cyclases superfamily. Dehydroquinate synthase family. Co(2+) is required as a cofactor. Requires Zn(2+) as cofactor. The cofactor is NAD(+).

It is found in the cytoplasm. The catalysed reaction is 7-phospho-2-dehydro-3-deoxy-D-arabino-heptonate = 3-dehydroquinate + phosphate. It functions in the pathway metabolic intermediate biosynthesis; chorismate biosynthesis; chorismate from D-erythrose 4-phosphate and phosphoenolpyruvate: step 2/7. In terms of biological role, catalyzes the conversion of 3-deoxy-D-arabino-heptulosonate 7-phosphate (DAHP) to dehydroquinate (DHQ). This chain is 3-dehydroquinate synthase, found in Exiguobacterium sp. (strain ATCC BAA-1283 / AT1b).